Reading from the N-terminus, the 944-residue chain is Serine/threonine-protein kinase ATG1 (944 aa).

Positions 24 to 327 (FNIGSEIGKG…FENFFTHQVV (304 aa)) constitute a Protein kinase domain. Residues 30–38 (IGKGSFAQV) and Lys-53 each bind ATP. Asp-167 functions as the Proton acceptor in the catalytic mechanism. A disordered region spans residues 344-423 (RQESRDPRSA…NSPREGGEGL (80 aa)). Low complexity predominate over residues 356 to 367 (SGSPSLSSRSPR). An LIR motif is present at residues 428-431 (PVAQ). Disordered regions lie at residues 443–475 (YDSV…PITE), 512–572 (LGDA…GSAS), 777–801 (QLPD…AGSP), 860–895 (EGSG…EEAH), and 925–944 (AVRR…HASS). 2 stretches are compositionally biased toward polar residues: residues 447–459 (TGRN…TSLL) and 516–549 (SQRS…NALA). Residues 563-572 (SLSASPGSAS) are compositionally biased toward low complexity. Residues 785-801 (HPSNHGTESIASSAGSP) are compositionally biased toward polar residues. Positions 865 to 881 (ETRRLSTGKEAEREAVK) are enriched in basic and acidic residues. The required for Cvt trafficking stretch occupies residues 924–930 (QAVRRRS).

It belongs to the protein kinase superfamily. Ser/Thr protein kinase family. APG1/unc-51/ULK1 subfamily. As to quaternary structure, homodimer. Dimerization requires the presence of ATG13. Forms a ternary complex with ATG13 and ATG17.

The protein resides in the cytoplasm. The protein localises to the preautophagosomal structure membrane. It catalyses the reaction L-seryl-[protein] + ATP = O-phospho-L-seryl-[protein] + ADP + H(+). It carries out the reaction L-threonyl-[protein] + ATP = O-phospho-L-threonyl-[protein] + ADP + H(+). Serine/threonine protein kinase involved in the cytoplasm to vacuole transport (Cvt) and found to be essential in autophagy, where it is required for the formation of autophagosomes. Involved in the clearance of protein aggregates which cannot be efficiently cleared by the proteasome. Required for selective autophagic degradation of the nucleus (nucleophagy) as well as for mitophagy which contributes to regulate mitochondrial quantity and quality by eliminating the mitochondria to a basal level to fulfill cellular energy requirements and preventing excess ROS production. Also involved in endoplasmic reticulum-specific autophagic process, in selective removal of ER-associated degradation (ERAD) substrates. Plays a key role in ATG9 and ATG23 cycling through the pre-autophagosomal structure and is necessary to promote ATG18 binding to ATG9 through phosphorylation of ATG9. Catalyzes phosphorylation of ATG4, decreasing the interaction between ATG4 and ATG8 and impairing deconjugation of PE-conjugated forms of ATG8. Autophagy is required for proper vegetative growth, asexual/sexual reproduction, and full virulence. Autophagy is particularly involved in the biosynthesis of deoxynivalenol (DON), an important virulence determinant. The polypeptide is Serine/threonine-protein kinase ATG1 (Gibberella zeae (strain ATCC MYA-4620 / CBS 123657 / FGSC 9075 / NRRL 31084 / PH-1) (Wheat head blight fungus)).